A 95-amino-acid polypeptide reads, in one-letter code: Costars family protein At4g33640 (95 aa).

N-acetylmethionine is present on Met1.

The protein belongs to the costars family.

The polypeptide is Costars family protein At4g33640 (Arabidopsis thaliana (Mouse-ear cress)).